A 118-amino-acid polypeptide reads, in one-letter code: Ribosome-binding factor A (118 aa).

This sequence belongs to the RbfA family. In terms of assembly, monomer. Binds 30S ribosomal subunits, but not 50S ribosomal subunits or 70S ribosomes.

The protein localises to the cytoplasm. One of several proteins that assist in the late maturation steps of the functional core of the 30S ribosomal subunit. Associates with free 30S ribosomal subunits (but not with 30S subunits that are part of 70S ribosomes or polysomes). Required for efficient processing of 16S rRNA. May interact with the 5'-terminal helix region of 16S rRNA. The protein is Ribosome-binding factor A of Bacillus cereus (strain AH820).